The sequence spans 165 residues: Small ribosomal subunit protein uS5 (165 aa).

The S5 DRBM domain maps to 13 to 76; sequence LEEKVLVVNR…EAARKNLITI (64 aa).

It belongs to the universal ribosomal protein uS5 family. Part of the 30S ribosomal subunit. Contacts proteins S4 and S8.

With S4 and S12 plays an important role in translational accuracy. Functionally, located at the back of the 30S subunit body where it stabilizes the conformation of the head with respect to the body. In Chlamydia felis (strain Fe/C-56) (Chlamydophila felis), this protein is Small ribosomal subunit protein uS5.